The primary structure comprises 190 residues: Holliday junction branch migration complex subunit RuvA (190 aa).

The segment at 1-64 (MIGRITGTLI…EDAHLLYGFG (64 aa)) is domain I. A domain II region spans residues 65–137 (TASERAAFRE…MRGKLGADIG (73 aa)). Residues 137–141 (GATPH) are flexible linker. Residues 142–190 (AVPDSQSDILNALLALGYSEKESLAALKTLPEGLGVSDGIRQALKALAR) form a domain III region.

The protein belongs to the RuvA family. Homotetramer. Forms an RuvA(8)-RuvB(12)-Holliday junction (HJ) complex. HJ DNA is sandwiched between 2 RuvA tetramers; dsDNA enters through RuvA and exits via RuvB. An RuvB hexamer assembles on each DNA strand where it exits the tetramer. Each RuvB hexamer is contacted by two RuvA subunits (via domain III) on 2 adjacent RuvB subunits; this complex drives branch migration. In the full resolvosome a probable DNA-RuvA(4)-RuvB(12)-RuvC(2) complex forms which resolves the HJ.

Its subcellular location is the cytoplasm. In terms of biological role, the RuvA-RuvB-RuvC complex processes Holliday junction (HJ) DNA during genetic recombination and DNA repair, while the RuvA-RuvB complex plays an important role in the rescue of blocked DNA replication forks via replication fork reversal (RFR). RuvA specifically binds to HJ cruciform DNA, conferring on it an open structure. The RuvB hexamer acts as an ATP-dependent pump, pulling dsDNA into and through the RuvAB complex. HJ branch migration allows RuvC to scan DNA until it finds its consensus sequence, where it cleaves and resolves the cruciform DNA. The chain is Holliday junction branch migration complex subunit RuvA from Bordetella avium (strain 197N).